The primary structure comprises 146 residues: Hemoglobin subunit beta (146 aa).

The Globin domain maps to 2–146 (HWSAEEKQLI…VAHALARKYH (145 aa)). Residues His-63 and His-92 each contribute to the heme b site.

This sequence belongs to the globin family. In terms of assembly, heterotetramer of two alpha chains and two beta chains. In terms of tissue distribution, red blood cells.

Involved in oxygen transport from the lung to the various peripheral tissues. In Eudyptes chrysocome (Western rockhopper penguin), this protein is Hemoglobin subunit beta (HBB).